The chain runs to 58 residues: Large ribosomal subunit protein uL30 (58 aa).

The protein belongs to the universal ribosomal protein uL30 family. As to quaternary structure, part of the 50S ribosomal subunit.

The chain is Large ribosomal subunit protein uL30 from Phocaeicola vulgatus (strain ATCC 8482 / DSM 1447 / JCM 5826 / CCUG 4940 / NBRC 14291 / NCTC 11154) (Bacteroides vulgatus).